Here is a 322-residue protein sequence, read N- to C-terminus: Sideroflexin fsf1 (322 aa).

4 consecutive transmembrane segments (helical) span residues 143–163, 175–195, 229–249, and 269–289; these read SYIYAVSASCGVAIGLNKIVP, VLGRLTPFAAVASAGVLNVFL, TALSRVINASPIMVIPPLVLM, and LGLITLTSLIALPLAIGVFPA.

The protein belongs to the sideroflexin family.

It is found in the mitochondrion membrane. In terms of biological role, mitochondrial amino-acid transporter that mediates transport of serine into mitochondria. The sequence is that of Sideroflexin fsf1 from Schizosaccharomyces pombe (strain 972 / ATCC 24843) (Fission yeast).